The following is a 232-amino-acid chain: uncharacterized protein (232 aa).

Helical transmembrane passes span 69 to 91 (LISA…YILF), 104 to 126 (FLEP…FFAL), 139 to 161 (FSRF…FFFL), 166 to 188 (ICFT…AMLS), and 200 to 219 (FIYS…QLII).

It localises to the cell membrane. This is an uncharacterized protein from Bacillus subtilis (strain 168).